Consider the following 264-residue polypeptide: Polyneuridine aldehyde esterase (264 aa).

Positions 1 to 6 (MHSAAN) are excised as a propeptide. The region spanning 12–122 (HFVLVHGGCL…MMPDPNHSLT (111 aa)) is the AB hydrolase-1 domain. Catalysis depends on residues Ser87, Asp216, and His244. A 16-epivellosimine-binding site is contributed by Ser87.

Belongs to the AB hydrolase superfamily. In terms of assembly, homodimer; homodimerizes in aqueous solutions at pH 7.0. As to expression, mainly expressed in roots and, to a lower level, in leaves.

The enzyme catalyses polyneuridine aldehyde + H2O = 16-epivellosimine + methanol + CO2. Its pathway is alkaloid biosynthesis; ajmaline biosynthesis. Inhibited by DEPC and HgCl(2). Functionally, hydrolase involved in the biosynthesis of ajmaline-type monoterpenoid indole alkaloids (MIAs) natural products, important plant-derived pharmaceuticals used in the therapy of heart disorders. Catalyzes the hydrolysis of polyneuridine aldehyde into epi-vellosimine, precursor of vomilenine, an intermediate chemical in the biosynthesis of ajmaline. This Rauvolfia serpentina (Serpentine wood) protein is Polyneuridine aldehyde esterase.